A 215-amino-acid chain; its full sequence is 24 kDa Ras-like protein (215 aa).

GTP is bound at residue 17-24; it reads GGGGVGKS. Residues 39–47 carry the Effector region motif; sequence YDPTIEDSY. GTP is bound by residues 64 to 68 and 123 to 126; these read DTAGQ and NKCD. Residues 179 to 199 are disordered; the sequence is QTGRPAIAAGGGGPAGSYTQD. Cysteine methyl ester is present on cysteine 212. Cysteine 212 carries the S-farnesyl cysteine lipid modification. Residues 213–215 constitute a propeptide, removed in mature form; that stretch reads VIA.

It belongs to the small GTPase superfamily. Ras family.

It is found in the cell membrane. It catalyses the reaction GTP + H2O = GDP + phosphate + H(+). In terms of biological role, ras proteins bind GDP/GTP and possess intrinsic GTPase activity. This Coprinopsis cinerea (strain Okayama-7 / 130 / ATCC MYA-4618 / FGSC 9003) (Inky cap fungus) protein is 24 kDa Ras-like protein (CC-RAS).